Here is a 989-residue protein sequence, read N- to C-terminus: E3 ubiquitin-protein ligase Arkadia (989 aa).

Glycyl lysine isopeptide (Lys-Gly) (interchain with G-Cter in SUMO2) cross-links involve residues lysine 19, lysine 33, lysine 46, lysine 58, lysine 72, lysine 86, lysine 95, and lysine 109. The tract at residues 63-195 (FSHLCDDSQK…TEADPVPSLL (133 aa)) is disordered. The segment covering 65–88 (HLCDDSQKQEKDMTGNQQEQEKSG) has biased composition (basic and acidic residues). The span at 97–109 (QQAGPSYVQNCVK) shows a compositional bias: polar residues. A compositionally biased stretch (basic and acidic residues) spans 110-120 (ENQEILGRRQQ). The span at 131 to 144 (SSLSECLSSPSSSL) shows a compositional bias: low complexity. Residue lysine 172 forms a Glycyl lysine isopeptide (Lys-Gly) (interchain with G-Cter in SUMO2) linkage. The segment covering 173–183 (SRSHSARSHKW) has biased composition (basic residues). Glycyl lysine isopeptide (Lys-Gly) (interchain with G-Cter in SUMO2) cross-links involve residues lysine 197 and lysine 217. A disordered region spans residues 213-293 (KRLVKSSSSQ…PSNPAAPSGS (81 aa)). The segment at 240–402 (ALAQRKYALL…VPTTSARMDS (163 aa)) is interaction with AXIN1. 2 stretches are compositionally biased toward low complexity: residues 248 to 270 (LLSS…SSST) and 278 to 291 (ASAS…AAPS). Positions 298 to 302 (VVVIE) match the SUMO interaction motif 1 (SIM) motif. The SUMO interaction motif 2 (SIM) motif lies at 323-329 (EVEIVTV). Residues 335–367 (SRSTLGHSRSHWSQGSSSHTGRPQESRNRSRIS) form a disordered region. Low complexity predominate over residues 345–355 (HWSQGSSSHTG). Positions 380–384 (VVDLT) match the SUMO interaction motif 3 (SIM) motif. 3 disordered regions span residues 388-475 (DEPT…MPRL), 506-559 (HGHH…YHDQ), and 641-675 (MPPP…PPPQ). A compositionally biased stretch (polar residues) spans 393–451 (VPTTSARMDSQTTSASINNSNPSTSEQASDTTSTVASSQPSTVSETEATLTSNSATGSS). The span at 506-520 (HGHHFQHHHHHHHTP) shows a compositional bias: basic residues. The segment covering 548–558 (ANSSSGSSYHD) has biased composition (polar residues). The ubiquitin binding stretch occupies residues 902–904 (YPH). Glycyl lysine isopeptide (Lys-Gly) (interchain with G-Cter in SUMO2) cross-links involve residues lysine 918 and lysine 922. Residues cysteine 937 and cysteine 940 each coordinate Zn(2+). An RING-type; atypical zinc finger spans residues 937-978 (CTICLSILEEGEDVRRLPCMHLFHQVCVDQWLITNKKCPICR). The ubiquitin binding stretch occupies residues 952–956 (RLPCM). Zn(2+)-binding residues include histidine 960 and cysteine 963.

It belongs to the Arkadia family. In terms of assembly, monomer. Interacts with SMAD6, SMAD7, AXIN1, AXIN2 and SKIL isoform SNON. Interacts with (phosphorylated) SMAD2 and SMAD3. Part of a complex containing RNF111, AXIN1 and SMAD7. Interacts (via SIM domains) with SUMO1 and SUMO2. In terms of tissue distribution, ubiquitously expressed.

It is found in the nucleus. It localises to the cytoplasm. Its subcellular location is the PML body. The catalysed reaction is S-ubiquitinyl-[E2 ubiquitin-conjugating enzyme]-L-cysteine + [acceptor protein]-L-lysine = [E2 ubiquitin-conjugating enzyme]-L-cysteine + N(6)-ubiquitinyl-[acceptor protein]-L-lysine.. The protein operates within protein modification; protein ubiquitination. Its activity is regulated as follows. Binds free ubiquitin non-covalently via its RING-type zinc finger. Ubiquitin-binding leads to enhance the E3 ubiquitin-protein ligase activity by stabilizing the ubiquitin-conjugating enzyme E2 (donor ubiquitin) in the 'closed' conformation and activating ubiquitin transfer. Functionally, E3 ubiquitin-protein ligase required for mesoderm patterning during embryonic development. Acts as an enhancer of the transcriptional responses of the SMAD2/SMAD3 effectors, which are activated downstream of BMP. Acts by mediating ubiquitination and degradation of SMAD inhibitors such as SMAD7, inducing their proteasomal degradation and thereby enhancing the transcriptional activity of TGF-beta and BMP. In addition to enhance transcription of SMAD2/SMAD3 effectors, also regulates their turnover by mediating their ubiquitination and subsequent degradation, coupling their activation with degradation, thereby ensuring that only effectors 'in use' are degraded. Activates SMAD3/SMAD4-dependent transcription by triggering signal-induced degradation of SNON isoform of SKIL. Associates with UBE2D2 as an E2 enzyme. Specifically binds polysumoylated chains via SUMO interaction motifs (SIMs) and mediates ubiquitination of sumoylated substrates. Catalyzes 'Lys-63'-linked ubiquitination of sumoylated XPC in response to UV irradiation, promoting nucleotide excision repair. Mediates ubiquitination and degradation of sumoylated PML. The regulation of the BMP-SMAD signaling is however independent of sumoylation and is not dependent of SUMO interaction motifs (SIMs). This Mus musculus (Mouse) protein is E3 ubiquitin-protein ligase Arkadia.